We begin with the raw amino-acid sequence, 135 residues long: Sex-regulated protein janus-A (135 aa).

Lys37 contacts substrate. His63 acts as the Proton acceptor in catalysis. 104–106 (SQG) contributes to the substrate binding site.

The protein belongs to the janus family.

JanA and janB regulate somatic sex differentiation. The sequence is that of Sex-regulated protein janus-A (janA) from Drosophila simulans (Fruit fly).